A 274-amino-acid polypeptide reads, in one-letter code: Diaminopimelate epimerase (274 aa).

Asparagine 11, glutamine 44, and asparagine 64 together coordinate substrate. The active-site Proton donor is the cysteine 73. Substrate-binding positions include 74–75 (GN), asparagine 157, asparagine 190, and 208–209 (ER). The active-site Proton acceptor is cysteine 217. 218–219 (GS) contacts substrate.

It belongs to the diaminopimelate epimerase family. In terms of assembly, homodimer.

It is found in the cytoplasm. It carries out the reaction (2S,6S)-2,6-diaminopimelate = meso-2,6-diaminopimelate. It participates in amino-acid biosynthesis; L-lysine biosynthesis via DAP pathway; DL-2,6-diaminopimelate from LL-2,6-diaminopimelate: step 1/1. Functionally, catalyzes the stereoinversion of LL-2,6-diaminopimelate (L,L-DAP) to meso-diaminopimelate (meso-DAP), a precursor of L-lysine and an essential component of the bacterial peptidoglycan. This chain is Diaminopimelate epimerase, found in Glaesserella parasuis serovar 5 (strain SH0165) (Haemophilus parasuis).